Here is a 202-residue protein sequence, read N- to C-terminus: LexA repressor 2 (202 aa).

Positions 28 to 48 (LADIATRFGFASRSVARKHIT) form a DNA-binding region, H-T-H motif. Residues Ser-123 and Lys-160 each act as for autocatalytic cleavage activity in the active site.

The protein belongs to the peptidase S24 family. In terms of assembly, homodimer.

It catalyses the reaction Hydrolysis of Ala-|-Gly bond in repressor LexA.. Its function is as follows. Represses a number of genes involved in the response to DNA damage (SOS response), including recA and lexA. In the presence of single-stranded DNA, RecA interacts with LexA causing an autocatalytic cleavage which disrupts the DNA-binding part of LexA, leading to derepression of the SOS regulon and eventually DNA repair. In Pseudomonas putida (strain ATCC 47054 / DSM 6125 / CFBP 8728 / NCIMB 11950 / KT2440), this protein is LexA repressor 2.